Here is a 446-residue protein sequence, read N- to C-terminus: Dimethylsulfoniopropionate lyase DddP (446 aa).

The segment covering M1–P13 has biased composition (basic and acidic residues). Residues M1–I30 form a disordered region. Residues D295, D297, D307, H371, E406, and E421 each contribute to the a divalent metal cation site.

The protein belongs to the peptidase M24B family. In terms of assembly, homodimer. A divalent metal cation is required as a cofactor.

It carries out the reaction S,S-dimethyl-beta-propiothetin = acrylate + dimethyl sulfide + H(+). Functionally, able to cleave dimethylsulfoniopropionate (DMSP), releasing dimethyl sulfide (DMS). DMS is the principal form by which sulfur is transported from oceans to the atmosphere. The real activity of the protein is however subject to debate and it is unclear whether it constitutes a real dimethylsulfoniopropionate lyase in vivo: the low activity with DMSP as substrate suggests that DMSP is not its native substrate. The sequence is that of Dimethylsulfoniopropionate lyase DddP from Roseovarius nubinhibens (strain ATCC BAA-591 / DSM 15170 / ISM).